Reading from the N-terminus, the 322-residue chain is Lymphokine-activated killer T-cell-originated protein kinase (322 aa).

Residue Met-1 is modified to N-acetylmethionine. Residues Thr-9 and Thr-24 each carry the phosphothreonine modification. Residue Ser-32 is modified to Phosphoserine. The 291-residue stretch at 32 to 322 (SPFMQKLGFG…HIVEALETDV (291 aa)) folds into the Protein kinase domain. ATP is bound at residue 38-46 (LGFGTGVNV). Ser-59 carries the phosphoserine modification. ATP is bound at residue Lys-64. The active-site Proton acceptor is Asp-167. Lys-169 is covalently cross-linked (Glycyl lysine isopeptide (Lys-Gly) (interchain with G-Cter in SUMO2)). Residues 320–322 (TDV) form a PDZ-interaction region.

Belongs to the protein kinase superfamily. STE Ser/Thr protein kinase family. MAP kinase kinase subfamily. As to quaternary structure, interacts with DLG1 and TP53. Phosphorylated; in a cell-cycle dependent manner at mitosis. As to expression, expressed in the testis and placenta. In the testis, restrictedly expressed in outer cell layer of seminiferous tubules.

It catalyses the reaction L-seryl-[protein] + ATP = O-phospho-L-seryl-[protein] + ADP + H(+). The enzyme catalyses L-threonyl-[protein] + ATP = O-phospho-L-threonyl-[protein] + ADP + H(+). The catalysed reaction is L-tyrosyl-[protein] + ATP = O-phospho-L-tyrosyl-[protein] + ADP + H(+). With respect to regulation, activated by phosphorylation. Its function is as follows. Phosphorylates MAP kinase p38. Seems to be active only in mitosis. May also play a role in the activation of lymphoid cells. When phosphorylated, forms a complex with TP53, leading to TP53 destabilization and attenuation of G2/M checkpoint during doxorubicin-induced DNA damage. In Homo sapiens (Human), this protein is Lymphokine-activated killer T-cell-originated protein kinase (PBK).